Here is a 1796-residue protein sequence, read N- to C-terminus: Y' element ATP-dependent helicase protein 1 copy 5 (1796 aa).

Residues 743-767 (AGEAASSDHDQKISRVTRKRPREPK) form a disordered region. Positions 797–974 (EIYMADTPSV…LQRIGLTGLA (178 aa)) constitute a Helicase ATP-binding domain. 810 to 817 (APPGYGKT) contributes to the ATP binding site. The Helicase C-terminal domain maps to 1031 to 1180 (KLLLALFEIE…EFYGLESKKG (150 aa)). Disordered regions lie at residues 1254-1278 (ANAS…NVRT) and 1294-1421 (TTES…DINK). The span at 1294-1397 (TTESTNSSTN…ATTTESTNAS (104 aa)) shows a compositional bias: low complexity. A compositionally biased stretch (basic and acidic residues) spans 1398-1421 (AKEDANKDGNAEDNRFHPVTDINK).

It belongs to the helicase family. Yeast subtelomeric Y' repeat subfamily.

In terms of biological role, catalyzes DNA unwinding and is involved in telomerase-independent telomere maintenance. This is Y' element ATP-dependent helicase protein 1 copy 5 (YRF1-5) from Saccharomyces cerevisiae (strain ATCC 204508 / S288c) (Baker's yeast).